Consider the following 148-residue polypeptide: Large ribosomal subunit protein bL9 (148 aa).

Belongs to the bacterial ribosomal protein bL9 family.

Binds to the 23S rRNA. The chain is Large ribosomal subunit protein bL9 from Finegoldia magna (strain ATCC 29328 / DSM 20472 / WAL 2508) (Peptostreptococcus magnus).